We begin with the raw amino-acid sequence, 639 residues long: Chaperone protein HtpG (639 aa).

The a; substrate-binding stretch occupies residues 1-347 (MSQQETHGFQ…SNDLPLNVSR (347 aa)). The interval 348–564 (EILQDNKVTT…EGEMSTQMIK (217 aa)) is b. Residues 565 to 639 (LMQAAGQDVP…MNQMLLASVK (75 aa)) are c.

Belongs to the heat shock protein 90 family. Homodimer.

It localises to the cytoplasm. Its function is as follows. Molecular chaperone. Has ATPase activity. This is Chaperone protein HtpG from Shewanella halifaxensis (strain HAW-EB4).